The chain runs to 289 residues: 4-diphosphocytidyl-2-C-methyl-D-erythritol kinase (289 aa).

Lys-10 is a catalytic residue. 94 to 104 (PVAAGLAGGSS) is an ATP binding site. Asp-136 is a catalytic residue.

It belongs to the GHMP kinase family. IspE subfamily.

It catalyses the reaction 4-CDP-2-C-methyl-D-erythritol + ATP = 4-CDP-2-C-methyl-D-erythritol 2-phosphate + ADP + H(+). It functions in the pathway isoprenoid biosynthesis; isopentenyl diphosphate biosynthesis via DXP pathway; isopentenyl diphosphate from 1-deoxy-D-xylulose 5-phosphate: step 3/6. Its function is as follows. Catalyzes the phosphorylation of the position 2 hydroxy group of 4-diphosphocytidyl-2C-methyl-D-erythritol. This chain is 4-diphosphocytidyl-2-C-methyl-D-erythritol kinase, found in Geobacillus sp. (strain WCH70).